Consider the following 335-residue polypeptide: Pregnancy-specific beta-1-glycoprotein 2 (335 aa).

An N-terminal signal peptide occupies residues 1-34; that stretch reads MGPLSAPPCTEHIKWKGLLVTASLLNFWNLPTTA. Residues 35-144 enclose the Ig-like V-type domain; it reads QVTIEAQPPK…TGYFTFTLYL (110 aa). Residues Asn61, Asn104, Asn111, and Asn199 are each glycosylated (N-linked (GlcNAc...) asparagine). Ig-like C2-type domains are found at residues 147 to 234 and 239 to 317; these read PKPS…VTLN and PDLP…TSLT. Disulfide bonds link Cys169–Cys217 and Cys261–Cys301.

It belongs to the immunoglobulin superfamily. CEA family.

It is found in the secreted. The protein is Pregnancy-specific beta-1-glycoprotein 2 (PSG2) of Homo sapiens (Human).